A 276-amino-acid chain; its full sequence is Sulfate transport system permease protein CysW (276 aa).

The next 6 membrane-spanning stretches (helical) occupy residues leucine 16–phenylalanine 36, valine 64–valine 84, valine 99–tyrosine 119, isoleucine 136–alanine 156, phenylalanine 212–phenylalanine 232, and threonine 242–leucine 262. The 208-residue stretch at leucine 60–glutamate 267 folds into the ABC transmembrane type-1 domain.

Belongs to the binding-protein-dependent transport system permease family. CysTW subfamily. In terms of assembly, the complex is composed of two ATP-binding proteins (CysA), two transmembrane proteins (CysT and CysW) and a solute-binding protein (CysP).

The protein localises to the cell inner membrane. Part of the ABC transporter complex CysAWTP (TC 3.A.1.6.1) involved in sulfate/thiosulfate import. Probably responsible for the translocation of the substrate across the membrane. This Synechocystis sp. (strain ATCC 27184 / PCC 6803 / Kazusa) protein is Sulfate transport system permease protein CysW (cysW).